The sequence spans 321 residues: ATP-dependent 6-phosphofructokinase (321 aa).

An ATP-binding site is contributed by Gly-11. Residue 21 to 25 participates in ADP binding; it reads RAVVR. Residues 72-73 and 102-105 each bind ATP; these read RC and GDGS. Asp-103 contacts Mg(2+). Residue 126–128 participates in substrate binding; sequence TID. Asp-128 functions as the Proton acceptor in the catalytic mechanism. Arg-155 serves as a coordination point for ADP. Residues Arg-163 and 170–172 each bind substrate; that span reads MGR. Residues 186-188, Arg-212, and 214-216 each bind ADP; these read GAE and KLH. Substrate contacts are provided by residues Glu-223, Arg-245, and 251-254; that span reads HIQR.

It belongs to the phosphofructokinase type A (PFKA) family. ATP-dependent PFK group I subfamily. Prokaryotic clade 'B1' sub-subfamily. In terms of assembly, homotetramer. The cofactor is Mg(2+).

Its subcellular location is the cytoplasm. It catalyses the reaction beta-D-fructose 6-phosphate + ATP = beta-D-fructose 1,6-bisphosphate + ADP + H(+). The protein operates within carbohydrate degradation; glycolysis; D-glyceraldehyde 3-phosphate and glycerone phosphate from D-glucose: step 3/4. Allosterically activated by ADP and other diphosphonucleosides, and allosterically inhibited by phosphoenolpyruvate. Catalyzes the phosphorylation of D-fructose 6-phosphate to fructose 1,6-bisphosphate by ATP, the first committing step of glycolysis. The polypeptide is ATP-dependent 6-phosphofructokinase (Caldanaerobacter subterraneus subsp. tengcongensis (strain DSM 15242 / JCM 11007 / NBRC 100824 / MB4) (Thermoanaerobacter tengcongensis)).